The sequence spans 501 residues: Aldehyde dehydrogenase 1A1 (501 aa).

The residue at position 2 (Ser-2) is an N-acetylserine. Residues Lys-91 and Lys-128 each carry the N6-acetyllysine modification. Residues 167–170, 193–196, 226–227, and 246–247 contribute to the NAD(+) site; these read IPWN, KPAE, GP, and GS. N6-acetyllysine is present on Lys-252. The Proton acceptor role is filled by Glu-269. Residue 269-271 participates in NAD(+) binding; it reads ELG. The active-site Nucleophile is Cys-303. The segment at 336–501 is mediates interaction with PRMT3; the sequence is LTPGVSQGPQ…VTIKISQKNS (166 aa). Residue Thr-337 is modified to Phosphothreonine. 349 to 353 is a binding site for NAD(+); that stretch reads EQYEK. An N6-acetyllysine mark is found at Lys-353 and Lys-367. 400-402 provides a ligand contact to NAD(+); the sequence is EIF. N6-acetyllysine is present on Lys-410. At Ser-413 the chain carries Phosphoserine. Lys-419 and Lys-495 each carry N6-acetyllysine.

It belongs to the aldehyde dehydrogenase family. In terms of assembly, homotetramer. Interacts with PRMT3; the interaction is direct, inhibits ALDH1A1 aldehyde dehydrogenase activity and is independent of the methyltransferase activity of PRMT3. Post-translationally, the N-terminus is blocked most probably by acetylation. As to expression, expressed in muscle, liver, small intestine, kidney, brain, lung, heart but not detected in erythrocytes (at protein level).

It localises to the cytoplasm. The protein resides in the cytosol. The protein localises to the cell projection. It is found in the axon. The enzyme catalyses an aldehyde + NAD(+) + H2O = a carboxylate + NADH + 2 H(+). It catalyses the reaction all-trans-retinal + NAD(+) + H2O = all-trans-retinoate + NADH + 2 H(+). It carries out the reaction 9-cis-retinal + NAD(+) + H2O = 9-cis-retinoate + NADH + 2 H(+). The catalysed reaction is 11-cis-retinal + NAD(+) + H2O = 11-cis-retinoate + NADH + 2 H(+). The enzyme catalyses 13-cis-retinal + NAD(+) + H2O = 13-cis-retinoate + NADH + 2 H(+). It catalyses the reaction 3-deoxyglucosone + NAD(+) + H2O = 2-dehydro-3-deoxy-D-gluconate + NADH + 2 H(+). It carries out the reaction (E)-4-hydroxynon-2-enal + NAD(+) + H2O = (E)-4-hydroxynon-2-enoate + NADH + 2 H(+). The catalysed reaction is malonaldehyde + NAD(+) + H2O = 3-oxopropanoate + NADH + 2 H(+). The enzyme catalyses hexanal + NAD(+) + H2O = hexanoate + NADH + 2 H(+). It catalyses the reaction propanal + NAD(+) + H2O = propanoate + NADH + 2 H(+). It carries out the reaction acetaldehyde + NAD(+) + H2O = acetate + NADH + 2 H(+). The catalysed reaction is benzaldehyde + NAD(+) + H2O = benzoate + NADH + 2 H(+). The enzyme catalyses 4-aminobutanal + NAD(+) + H2O = 4-aminobutanoate + NADH + 2 H(+). The protein operates within cofactor metabolism; retinol metabolism. Its function is as follows. Cytosolic dehydrogenase that catalyzes the irreversible oxidation of a wide range of aldehydes to their corresponding carboxylic acid. Functions downstream of retinol dehydrogenases and catalyzes the oxidation of retinaldehyde into retinoic acid, the second step in the oxidation of retinol/vitamin A into retinoic acid. This pathway is crucial to control the levels of retinol and retinoic acid, two important molecules which excess can be teratogenic and cytotoxic. Also oxidizes aldehydes resulting from lipid peroxidation like (E)-4-hydroxynon-2-enal/HNE, malonaldehyde and hexanal that form protein adducts and are highly cytotoxic. By participating for instance to the clearance of (E)-4-hydroxynon-2-enal/HNE in the lens epithelium prevents the formation of HNE-protein adducts and lens opacification. Also functions downstream of fructosamine-3-kinase in the fructosamine degradation pathway by catalyzing the oxidation of 3-deoxyglucosone, the carbohydrate product of fructosamine 3-phosphate decomposition, which is itself a potent glycating agent that may react with lysine and arginine side-chains of proteins. Also has an aminobutyraldehyde dehydrogenase activity and is probably part of an alternative pathway for the biosynthesis of GABA/4-aminobutanoate in midbrain, thereby playing a role in GABAergic synaptic transmission. The protein is Aldehyde dehydrogenase 1A1 of Bos taurus (Bovine).